Consider the following 412-residue polypeptide: Alanyl-tRNA editing protein Aarsd1-B (412 aa).

4 residues coordinate Zn(2+): H108, H112, C208, and H212.

This sequence belongs to the class-II aminoacyl-tRNA synthetase family. Alax-L subfamily. It depends on Zn(2+) as a cofactor.

Its subcellular location is the cytoplasm. Its function is as follows. Functions in trans to edit the amino acid moiety from incorrectly charged tRNA(Ala). This chain is Alanyl-tRNA editing protein Aarsd1-B (aarsd1-b), found in Xenopus laevis (African clawed frog).